Here is a 990-residue protein sequence, read N- to C-terminus: Bacteriophage adsorption protein A (990 aa).

Positions 1–27 (MKENNLNRVIGWSGLLLTSLLSTSALA) are cleaved as a signal peptide. 3 TPR repeats span residues 81 to 114 (IPLT…HPGD), 612 to 645 (ANAY…EPNN), and 646 to 679 (SNTQ…LPDD).

(Microbial infection) Interacts with N4 phage non-contractile sheath protein; this interaction is essential for viral adsorption to the host.

It is found in the cell outer membrane. Its function is as follows. (Microbial infection) Allows N4 phage attachment by binding to the viral non-contractile sheath protein. The protein is Bacteriophage adsorption protein A (nfrA) of Escherichia coli (strain K12).